Reading from the N-terminus, the 469-residue chain is Glutamate--tRNA ligase (469 aa).

The 'HIGH' region motif lies at 9–19; that stretch reads PSPTGFLHVGG. Zn(2+) contacts are provided by Cys98, Cys100, Cys125, and Asp127. A 'KMSKS' region motif is present at residues 236 to 240; that stretch reads KLSKR. Lys239 provides a ligand contact to ATP.

Belongs to the class-I aminoacyl-tRNA synthetase family. Glutamate--tRNA ligase type 1 subfamily. In terms of assembly, monomer. Requires Zn(2+) as cofactor.

The protein resides in the cytoplasm. It carries out the reaction tRNA(Glu) + L-glutamate + ATP = L-glutamyl-tRNA(Glu) + AMP + diphosphate. In terms of biological role, catalyzes the attachment of glutamate to tRNA(Glu) in a two-step reaction: glutamate is first activated by ATP to form Glu-AMP and then transferred to the acceptor end of tRNA(Glu). The protein is Glutamate--tRNA ligase of Shewanella baltica (strain OS155 / ATCC BAA-1091).